Reading from the N-terminus, the 89-residue chain is Small ribosomal subunit protein uS15 (89 aa).

It belongs to the universal ribosomal protein uS15 family. As to quaternary structure, part of the 30S ribosomal subunit. Forms a bridge to the 50S subunit in the 70S ribosome, contacting the 23S rRNA.

One of the primary rRNA binding proteins, it binds directly to 16S rRNA where it helps nucleate assembly of the platform of the 30S subunit by binding and bridging several RNA helices of the 16S rRNA. Its function is as follows. Forms an intersubunit bridge (bridge B4) with the 23S rRNA of the 50S subunit in the ribosome. The protein is Small ribosomal subunit protein uS15 of Gloeothece citriformis (strain PCC 7424) (Cyanothece sp. (strain PCC 7424)).